The following is a 101-amino-acid chain: NADH-quinone oxidoreductase subunit K (101 aa).

Helical transmembrane passes span 5 to 25, 29 to 49, and 62 to 82; these read LGQV…GVLL, LIMI…VLVG, and VALL…ALVV.

The protein belongs to the complex I subunit 4L family. As to quaternary structure, NDH-1 is composed of 14 different subunits. Subunits NuoA, H, J, K, L, M, N constitute the membrane sector of the complex.

Its subcellular location is the cell inner membrane. The enzyme catalyses a quinone + NADH + 5 H(+)(in) = a quinol + NAD(+) + 4 H(+)(out). Functionally, NDH-1 shuttles electrons from NADH, via FMN and iron-sulfur (Fe-S) centers, to quinones in the respiratory chain. The immediate electron acceptor for the enzyme in this species is believed to be ubiquinone. Couples the redox reaction to proton translocation (for every two electrons transferred, four hydrogen ions are translocated across the cytoplasmic membrane), and thus conserves the redox energy in a proton gradient. The protein is NADH-quinone oxidoreductase subunit K of Syntrophotalea carbinolica (strain DSM 2380 / NBRC 103641 / GraBd1) (Pelobacter carbinolicus).